The primary structure comprises 886 residues: Alanine--tRNA ligase (886 aa).

His-568, His-572, Cys-670, and His-674 together coordinate Zn(2+).

This sequence belongs to the class-II aminoacyl-tRNA synthetase family. The cofactor is Zn(2+).

It localises to the cytoplasm. It carries out the reaction tRNA(Ala) + L-alanine + ATP = L-alanyl-tRNA(Ala) + AMP + diphosphate. Its function is as follows. Catalyzes the attachment of alanine to tRNA(Ala) in a two-step reaction: alanine is first activated by ATP to form Ala-AMP and then transferred to the acceptor end of tRNA(Ala). Also edits incorrectly charged Ser-tRNA(Ala) and Gly-tRNA(Ala) via its editing domain. The protein is Alanine--tRNA ligase of Prochlorococcus marinus (strain NATL1A).